The sequence spans 433 residues: MSRTIVIVGCGVFGLSTAVELAKNHSFDNIIAIDAEPVPSSMSAANDINKIVRPEYADLKYMKLALEAMEKWRNDPELSSVYFECGRLSTISKDPYRARFDEVAQRNLRKLLGDSALINLSSSEEIRKKYPSLFSNSPLRSDMQAVVNEHAGYANSAASLKLLELKARELGVEFVFGKAGKFKKFVVNHSETDIDKNDNHVSVQTEDGTIYHADTILLAVGAYLNAYLNTSHRVCAKGLPVAHIQLTDEEFKTYKNMPIIFDPDCAYAFPPYPVTKLIKLASTGYEYVCNVETDYDENSKVVSIPHSGPSKSSLPKYAIIQMRRFLDTFLPDLADRSLINTKMCWISDTEDANFLIDKVPQFDNVFVANGDSGHAFKFLPNIGRYIAQRILGDLSEEWKDAWRWREDDKASELKWRCVRSLIDYKDAEFTYDK.

The N-terminal stretch at 1–18 (MSRTIVIVGCGVFGLSTA) is a signal peptide. N-linked (GlcNAc...) asparagine glycans are attached at residues Asn24, Asn119, Asn188, and Asn229.

Belongs to the MSOX/MTOX family. In terms of assembly, monomer. Requires FAD as cofactor.

Its subcellular location is the secreted. It localises to the cytoplasm. The protein localises to the nucleus. It catalyses the reaction L-saccharopine + O2 + H2O = (S)-2-amino-6-oxohexanoate + L-glutamate + H2O2. The chain is L-saccharopine oxidase from Schizosaccharomyces pombe (strain 972 / ATCC 24843) (Fission yeast).